We begin with the raw amino-acid sequence, 404 residues long: Glucose-1-phosphate adenylyltransferase 2 (404 aa).

Residues Tyr97, Gly162, 177–178, and Ser195 contribute to the alpha-D-glucose 1-phosphate site; that span reads EK.

The protein belongs to the bacterial/plant glucose-1-phosphate adenylyltransferase family. As to quaternary structure, homotetramer.

The catalysed reaction is alpha-D-glucose 1-phosphate + ATP + H(+) = ADP-alpha-D-glucose + diphosphate. Its pathway is glycan biosynthesis; glycogen biosynthesis. Its function is as follows. Involved in the biosynthesis of ADP-glucose, a building block required for the elongation reactions to produce glycogen. Catalyzes the reaction between ATP and alpha-D-glucose 1-phosphate (G1P) to produce pyrophosphate and ADP-Glc. In Vibrio vulnificus (strain CMCP6), this protein is Glucose-1-phosphate adenylyltransferase 2.